The sequence spans 372 residues: NAD(P)H-quinone oxidoreductase subunit 1 (372 aa).

8 helical membrane passes run 27-47 (IIWLPLPMLLVLVAAVVGVLV), 97-117 (ILFTAGPILVLVPVILSWLIV), 128-148 (VGIGIFLWIALSSIQPIGLLM), 176-196 (LALSVLAIVLMTNSLSTIDIV), 204-224 (ILSWNIWRQPVGFIVFWICAL), 266-286 (ILSALLVSILYLGGWGFPIPV), 308-328 (SIGIVMTVLKAYLLVFIAILL), and 347-367 (FLLPISLANLLITAGLKLAFP).

This sequence belongs to the complex I subunit 1 family. In terms of assembly, NDH-1 is composed of at least 11 different subunits.

The protein resides in the cellular thylakoid membrane. It carries out the reaction a plastoquinone + NADH + (n+1) H(+)(in) = a plastoquinol + NAD(+) + n H(+)(out). It catalyses the reaction a plastoquinone + NADPH + (n+1) H(+)(in) = a plastoquinol + NADP(+) + n H(+)(out). Its function is as follows. NDH-1 shuttles electrons from an unknown electron donor, via FMN and iron-sulfur (Fe-S) centers, to quinones in the respiratory and/or the photosynthetic chain. The immediate electron acceptor for the enzyme in this species is believed to be plastoquinone. Couples the redox reaction to proton translocation, and thus conserves the redox energy in a proton gradient. The protein is NAD(P)H-quinone oxidoreductase subunit 1 of Prochlorococcus marinus (strain MIT 9301).